We begin with the raw amino-acid sequence, 423 residues long: Diaminobutyrate--2-oxoglutarate transaminase (423 aa).

Lys267 is modified (N6-(pyridoxal phosphate)lysine).

This sequence belongs to the class-III pyridoxal-phosphate-dependent aminotransferase family. In terms of assembly, homohexamer. Requires pyridoxal 5'-phosphate as cofactor.

It catalyses the reaction L-2,4-diaminobutanoate + 2-oxoglutarate = L-aspartate 4-semialdehyde + L-glutamate. Its pathway is amine and polyamine biosynthesis; ectoine biosynthesis; L-ectoine from L-aspartate 4-semialdehyde: step 1/3. Functionally, catalyzes reversively the conversion of L-aspartate beta-semialdehyde (ASA) to L-2,4-diaminobutyrate (DABA) by transamination with L-glutamate. This Chromohalobacter salexigens (strain ATCC BAA-138 / DSM 3043 / CIP 106854 / NCIMB 13768 / 1H11) protein is Diaminobutyrate--2-oxoglutarate transaminase (ectB).